Here is a 152-residue protein sequence, read N- to C-terminus: Mid1-interacting protein 1A (152 aa).

Positions 87–105 (SEDQRRKKDTSASEPVRTE) are enriched in basic and acidic residues. A disordered region spans residues 87–109 (SEDQRRKKDTSASEPVRTEEESD).

The protein belongs to the SPOT14 family. In terms of tissue distribution, expressed for a short period in the cells that will produce the enveloping layer (EVL).

The protein localises to the nucleus. It is found in the cytoplasm. The protein resides in the cytoskeleton. Involved in stabilization of microtubules. May play a role in the regulation of lipogenesis. This is Mid1-interacting protein 1A (mid1ip1a) from Danio rerio (Zebrafish).